A 201-amino-acid chain; its full sequence is Cytochrome c oxidase assembly protein CtaG (201 aa).

The Cytoplasmic segment spans residues 1–13 (MTDQGENEKKQRR). A helical; Signal-anchor for type II membrane protein membrane pass occupies residues 14–36 (SNATIAVACLSFFVCMIGAAYAS). Over 37–201 (VPLYRIFCQV…KAVGSTRNGG (165 aa)) the chain is Periplasmic.

This sequence belongs to the COX11/CtaG family.

Its subcellular location is the cell inner membrane. Functionally, exerts its effect at some terminal stage of cytochrome c oxidase synthesis, probably by being involved in the insertion of the copper B into subunit I. The protein is Cytochrome c oxidase assembly protein CtaG of Brucella ovis (strain ATCC 25840 / 63/290 / NCTC 10512).